Here is a 279-residue protein sequence, read N- to C-terminus: uncharacterized protein (279 aa).

Composition is skewed to low complexity over residues 1 to 25, 86 to 151, and 232 to 250; these read MNEN…NNNN, PSQS…NGNN, and NKNN…DDNN. 3 disordered regions span residues 1–27, 83–153, and 213–260; these read MNEN…NNIK, NLFP…NNID, and QSVN…KVKS.

This is an uncharacterized protein from Dictyostelium discoideum (Social amoeba).